The chain runs to 344 residues: tRNA N6-adenosine threonylcarbamoyltransferase (344 aa).

Residues His110 and His114 each contribute to the Fe cation site. Substrate-binding positions include 132-136 (LVSGG), Asp166, Gly179, Asp183, and Asn278. Asp306 contacts Fe cation.

It belongs to the KAE1 / TsaD family. The cofactor is Fe(2+).

It localises to the cytoplasm. It carries out the reaction L-threonylcarbamoyladenylate + adenosine(37) in tRNA = N(6)-L-threonylcarbamoyladenosine(37) in tRNA + AMP + H(+). In terms of biological role, required for the formation of a threonylcarbamoyl group on adenosine at position 37 (t(6)A37) in tRNAs that read codons beginning with adenine. Is involved in the transfer of the threonylcarbamoyl moiety of threonylcarbamoyl-AMP (TC-AMP) to the N6 group of A37, together with TsaE and TsaB. TsaD likely plays a direct catalytic role in this reaction. This Nocardia farcinica (strain IFM 10152) protein is tRNA N6-adenosine threonylcarbamoyltransferase.